A 238-amino-acid polypeptide reads, in one-letter code: Zinc import ATP-binding protein ZnuC (238 aa).

The 216-residue stretch at 5 to 220 folds into the ABC transporter domain; sequence ITLKNIHVSF…LEFISIFGLK (216 aa). 37–44 contacts ATP; the sequence is GPNGAGKS.

It belongs to the ABC transporter superfamily. Zinc importer (TC 3.A.1.15.5) family. As to quaternary structure, the complex is composed of two ATP-binding proteins (ZnuC), two transmembrane proteins (ZnuB) and a solute-binding protein (ZnuA).

It is found in the cell inner membrane. The catalysed reaction is Zn(2+)(out) + ATP(in) + H2O(in) = Zn(2+)(in) + ADP(in) + phosphate(in) + H(+)(in). Functionally, part of the ABC transporter complex ZnuABC involved in zinc import. Responsible for energy coupling to the transport system. This Buchnera aphidicola subsp. Schizaphis graminum (strain Sg) protein is Zinc import ATP-binding protein ZnuC.